Reading from the N-terminus, the 597-residue chain is Adenine deaminase 2 (597 aa).

This sequence belongs to the metallo-dependent hydrolases superfamily. Adenine deaminase family. Mn(2+) is required as a cofactor.

It catalyses the reaction adenine + H2O + H(+) = hypoxanthine + NH4(+). The sequence is that of Adenine deaminase 2 from Agrobacterium fabrum (strain C58 / ATCC 33970) (Agrobacterium tumefaciens (strain C58)).